The primary structure comprises 134 residues: Large ribosomal subunit protein eL14 (134 aa).

This sequence belongs to the eukaryotic ribosomal protein eL14 family. Component of the large ribosomal subunit (LSU). Mature yeast ribosomes consist of a small (40S) and a large (60S) subunit. The 40S small subunit contains 1 molecule of ribosomal RNA (18S rRNA) and at least 33 different proteins. The large 60S subunit contains 3 rRNA molecules (25S, 5.8S and 5S rRNA) and at least 46 different proteins.

The protein resides in the cytoplasm. Its subcellular location is the nucleus. In terms of biological role, component of the ribosome, a large ribonucleoprotein complex responsible for the synthesis of proteins in the cell. The small ribosomal subunit (SSU) binds messenger RNAs (mRNAs) and translates the encoded message by selecting cognate aminoacyl-transfer RNA (tRNA) molecules. The large subunit (LSU) contains the ribosomal catalytic site termed the peptidyl transferase center (PTC), which catalyzes the formation of peptide bonds, thereby polymerizing the amino acids delivered by tRNAs into a polypeptide chain. The nascent polypeptides leave the ribosome through a tunnel in the LSU and interact with protein factors that function in enzymatic processing, targeting, and the membrane insertion of nascent chains at the exit of the ribosomal tunnel. The protein is Large ribosomal subunit protein eL14 (rpl14) of Schizosaccharomyces pombe (strain 972 / ATCC 24843) (Fission yeast).